The primary structure comprises 581 residues: Arginine--tRNA ligase (581 aa).

A 'HIGH' region motif is present at residues 126-136; sequence PNLAKEMHVGH.

This sequence belongs to the class-I aminoacyl-tRNA synthetase family. Monomer.

It is found in the cytoplasm. The enzyme catalyses tRNA(Arg) + L-arginine + ATP = L-arginyl-tRNA(Arg) + AMP + diphosphate. The polypeptide is Arginine--tRNA ligase (Shewanella loihica (strain ATCC BAA-1088 / PV-4)).